The chain runs to 526 residues: Probable feruloyl esterase B-2 (526 aa).

The first 18 residues, 1-18 (MTKLSLLPLLTLASAVLA), serve as a signal peptide directing secretion. 2 disulfide bridges follow: cysteine 27–cysteine 74 and cysteine 62–cysteine 113. Residue asparagine 52 is glycosylated (N-linked (GlcNAc...) asparagine). The N-linked (GlcNAc...) asparagine glycan is linked to asparagine 137. Disulfide bonds link cysteine 186/cysteine 441, cysteine 255/cysteine 272, cysteine 281/cysteine 291, and cysteine 503/cysteine 525. The active-site Acyl-ester intermediate is serine 187. Asparagine 233 carries an N-linked (GlcNAc...) asparagine glycan. The Ca(2+) site is built by aspartate 256, aspartate 259, alanine 261, aspartate 263, and isoleucine 265. Active-site charge relay system residues include aspartate 400 and histidine 440. N-linked (GlcNAc...) asparagine glycosylation is present at asparagine 516.

It belongs to the tannase family.

The protein localises to the secreted. It carries out the reaction feruloyl-polysaccharide + H2O = ferulate + polysaccharide.. Functionally, involved in degradation of plant cell walls. Hydrolyzes the feruloyl-arabinose ester bond in arabinoxylans as well as the feruloyl-galactose and feruloyl-arabinose ester bonds in pectin. The chain is Probable feruloyl esterase B-2 (faeB-2) from Aspergillus fumigatus (strain ATCC MYA-4609 / CBS 101355 / FGSC A1100 / Af293) (Neosartorya fumigata).